Consider the following 34-residue polypeptide: MPVNNFGFLATLLFVAVPMLFLIGLYIQTNSNKS.

Residues 7-27 (GFLATLLFVAVPMLFLIGLYI) form a helical membrane-spanning segment.

Belongs to the PsbM family. As to quaternary structure, PSII is composed of 1 copy each of membrane proteins PsbA, PsbB, PsbC, PsbD, PsbE, PsbF, PsbH, PsbI, PsbJ, PsbK, PsbL, PsbM, PsbT, PsbX, PsbY, Psb30/Ycf12, peripheral proteins PsbO, CyanoQ (PsbQ), PsbU, PsbV and a large number of cofactors. It forms dimeric complexes.

It localises to the cellular thylakoid membrane. Functionally, one of the components of the core complex of photosystem II (PSII). PSII is a light-driven water:plastoquinone oxidoreductase that uses light energy to abstract electrons from H(2)O, generating O(2) and a proton gradient subsequently used for ATP formation. It consists of a core antenna complex that captures photons, and an electron transfer chain that converts photonic excitation into a charge separation. This subunit is found at the monomer-monomer interface. The polypeptide is Photosystem II reaction center protein M (Prochlorococcus marinus (strain MIT 9303)).